The following is a 117-amino-acid chain: Large ribosomal subunit protein bL20 (117 aa).

It belongs to the bacterial ribosomal protein bL20 family.

Its function is as follows. Binds directly to 23S ribosomal RNA and is necessary for the in vitro assembly process of the 50S ribosomal subunit. It is not involved in the protein synthesizing functions of that subunit. The protein is Large ribosomal subunit protein bL20 (rplT) of Synechocystis sp. (strain ATCC 27184 / PCC 6803 / Kazusa).